A 141-amino-acid chain; its full sequence is Large ribosomal subunit protein uL13 (141 aa).

Belongs to the universal ribosomal protein uL13 family. As to quaternary structure, part of the 50S ribosomal subunit.

Functionally, this protein is one of the early assembly proteins of the 50S ribosomal subunit, although it is not seen to bind rRNA by itself. It is important during the early stages of 50S assembly. The chain is Large ribosomal subunit protein uL13 from Helicobacter pylori (strain P12).